The chain runs to 1035 residues: Putative protein FAM47C (1035 aa).

Disordered regions lie at residues 1–21 (MGDQRPQDRPSSPGMDSTPWY) and 159–797 (LEDA…RRVS). Over residues 159 to 173 (LEDAGSCEGQEKTTD) the composition is skewed to basic and acidic residues. Residues 380-392 (PEPPKTRVPPLRP) are compositionally biased toward pro residues. A compositionally biased stretch (basic and acidic residues) spans 478 to 490 (PPEKDVSHLRPEP). Residues 533–544 (SLHQAPPESSVS) show a composition bias toward polar residues. Composition is skewed to basic and acidic residues over residues 611–622 (PETRVSHLRPEP), 683–694 (PETRVSHLRPEP), and 753–766 (EPLETRVSHLRPEP).

This sequence belongs to the FAM47 family.

The polypeptide is Putative protein FAM47C (FAM47C) (Homo sapiens (Human)).